The following is a 268-amino-acid chain: Glycine/sarcosine N-methyltransferase (268 aa).

S-adenosyl-L-methionine-binding positions include tyrosine 26, tryptophan 34, arginine 43, alanine 67, aspartate 88, 114–115, and leucine 132; that span reads DW. Asparagine 134, arginine 167, and tyrosine 206 together coordinate substrate.

The protein belongs to the class I-like SAM-binding methyltransferase superfamily. Glycine N-methyltransferase family. In terms of assembly, monomer.

The enzyme catalyses glycine + 2 S-adenosyl-L-methionine = N,N-dimethylglycine + 2 S-adenosyl-L-homocysteine + 2 H(+). The catalysed reaction is glycine + S-adenosyl-L-methionine = sarcosine + S-adenosyl-L-homocysteine + H(+). It carries out the reaction sarcosine + S-adenosyl-L-methionine = N,N-dimethylglycine + S-adenosyl-L-homocysteine + H(+). Its pathway is amine and polyamine biosynthesis; betaine biosynthesis via glycine pathway; betaine from glycine: step 1/3. The protein operates within amine and polyamine biosynthesis; betaine biosynthesis via glycine pathway; betaine from glycine: step 2/3. With respect to regulation, p-chloromercuribenzoic acid inhibits more than 95% of the GSMT activities on glycine and sarcosine, and S-adenosylhomocysteine (AdoHcy) inhibits completely GSMT activities. In terms of biological role, catalyzes the methylation of glycine and sarcosine to sarcosine and dimethylglycine, respectively, with S-adenosylmethionine (AdoMet) acting as the methyl donor. It has strict specificity for glycine and sarcosine as the methyl group acceptors. The polypeptide is Glycine/sarcosine N-methyltransferase (Halorhodospira halochloris (Ectothiorhodospira halochloris)).